Consider the following 621-residue polypeptide: Very-long-chain aldehyde decarbonylase GL1-5 (621 aa).

5 helical membrane-spanning segments follow: residues 99 to 119 (IILS…GQHL), 126 to 146 (GAGL…YWFH), 186 to 206 (LLFS…IIAF), 224 to 244 (FELV…LMYT), and 332 to 352 (MWPL…SFTV). The 135-residue stretch at 138-272 (VEFLYYWFHR…MPFYDYIYNT (135 aa)) folds into the Fatty acid hydroxylase domain.

The protein belongs to the sterol desaturase family. In terms of assembly, homodimer. In terms of tissue distribution, expressed in panicles, developing spikelets, stamens and hulls and, at low levels, in roots, developing seeds, flag leaves and seedling shoots. Strongly expressed in the epidermal cells of anthers.

It localises to the endoplasmic reticulum membrane. It catalyses the reaction a long-chain fatty aldehyde + 2 NADPH + O2 + H(+) = a long-chain alkane + formate + 2 NADP(+) + H2O. Its function is as follows. Aldehyde decarbonylase involved in the conversion of aldehydes to alkanes. Core component of a very-long-chain alkane synthesis complex. Required for the biosynthesis of very-long-chain fatty acids (including polyesters) in cuticles, anther tapetum and pollen exine. This Oryza sativa subsp. japonica (Rice) protein is Very-long-chain aldehyde decarbonylase GL1-5.